Consider the following 53-residue polypeptide: Small ribosomal subunit protein uS14 (53 aa).

C18, C21, C36, and C39 together coordinate Zn(2+).

It belongs to the universal ribosomal protein uS14 family. Zinc-binding uS14 subfamily. Part of the 30S ribosomal subunit. The cofactor is Zn(2+).

Its function is as follows. Binds 16S rRNA, required for the assembly of 30S particles. This is Small ribosomal subunit protein uS14 from Thermoplasma volcanium (strain ATCC 51530 / DSM 4299 / JCM 9571 / NBRC 15438 / GSS1).